We begin with the raw amino-acid sequence, 216 residues long: MPIGVPKVPYRIPGDEEATWVDLYNVMYRERTLFLGQEIRCEVTNHITGLMVYLSIEDGISDIFLFINSPGGWLISGMAIFDTMQTVTPDIYTICLGIAASMASFILLGGEPTKRIAFPHARIMLHQPASAYYRARTPEFLLEVEELHKVREMITRVYALRTGKPFWVVSEDMERDVFMSADEAKAYGLVDIVGDEMLDEHCDTDPVWFPEMFKDW.

Residue Ser-101 is the Nucleophile of the active site. Residue His-126 is part of the active site.

It belongs to the peptidase S14 family. In terms of assembly, component of the chloroplastic Clp protease core complex.

The protein localises to the plastid. It is found in the chloroplast stroma. It catalyses the reaction Hydrolysis of proteins to small peptides in the presence of ATP and magnesium. alpha-casein is the usual test substrate. In the absence of ATP, only oligopeptides shorter than five residues are hydrolyzed (such as succinyl-Leu-Tyr-|-NHMec, and Leu-Tyr-Leu-|-Tyr-Trp, in which cleavage of the -Tyr-|-Leu- and -Tyr-|-Trp bonds also occurs).. Cleaves peptides in various proteins in a process that requires ATP hydrolysis. Has a chymotrypsin-like activity. Plays a major role in the degradation of misfolded proteins. In Oryza nivara (Indian wild rice), this protein is ATP-dependent Clp protease proteolytic subunit.